A 703-amino-acid chain; its full sequence is WPP domain-interacting tail-anchored protein 1 (703 aa).

Positions 1-12 (METETEHDRTVS) are enriched in basic and acidic residues. Disordered stretches follow at residues 1–27 (METE…SSTK) and 86–107 (FVSK…DDDS). Residues 92-107 (EDEEEPSSNVDDDDDS) are compositionally biased toward acidic residues. Positions 118-183 (SSILNSEVKE…MEQVVEMKKQ (66 aa)) form a coiled coil. Residues 189–208 (RLSSGLDEQGSWSGGQTSVS) form a disordered region. Positions 198–208 (GSWSGGQTSVS) are enriched in polar residues. 3 coiled-coil regions span residues 236-265 (LEKS…MKLY), 318-461 (KRED…RDKG), and 500-604 (STVS…SREN). The helical transmembrane segment at 679-699 (FKHILVAILVILISSIAYVIS) threads the bilayer.

As to quaternary structure, homodimer. Component of Ran complexes at least composed of WIT1 or WIT2, RANGAP1 or RANGAP2, and WIP1 or WIP2 or WIP3. Interacts with WIP2, WPP1/MAF1, WPP2/MAF2, RANGAP1 and RANGAP2. Component of a ternary complex composed of WPP1, HSP70-1 and WIT1. Interacts with KAKU1. Interacts with WIP1. As to expression, ubiquitous.

Its subcellular location is the nucleus envelope. The protein localises to the nucleus membrane. Its function is as follows. Together with WIT2, required for the nuclear envelope docking of RANGAP proteins in root tips. This chain is WPP domain-interacting tail-anchored protein 1 (WIT1), found in Arabidopsis thaliana (Mouse-ear cress).